A 68-amino-acid polypeptide reads, in one-letter code: Large ribosomal subunit protein bL31 (68 aa).

It belongs to the bacterial ribosomal protein bL31 family. Type A subfamily. Part of the 50S ribosomal subunit.

In terms of biological role, binds the 23S rRNA. The polypeptide is Large ribosomal subunit protein bL31 (Helicobacter hepaticus (strain ATCC 51449 / 3B1)).